A 120-amino-acid polypeptide reads, in one-letter code: Chaperonin GroEL (120 aa).

23-27 (DGTTT) is a binding site for ATP.

It belongs to the chaperonin (HSP60) family. As to quaternary structure, forms a cylinder of 14 subunits composed of two heptameric rings stacked back-to-back. Interacts with the co-chaperonin GroES.

Its subcellular location is the cytoplasm. It catalyses the reaction ATP + H2O + a folded polypeptide = ADP + phosphate + an unfolded polypeptide.. Its function is as follows. Together with its co-chaperonin GroES, plays an essential role in assisting protein folding. The GroEL-GroES system forms a nano-cage that allows encapsulation of the non-native substrate proteins and provides a physical environment optimized to promote and accelerate protein folding. The chain is Chaperonin GroEL from Mycobacterium scrofulaceum.